Reading from the N-terminus, the 324-residue chain is MAAVPRGLLSRINQFLSIRSITPSSSESLPHCSSFFLIRRFSSDTGLMDGGGSDIIGAQTRIIEAKQGEMSSRSKRTGIIAVKCGMTALWDKWGKRIPISILWVDDNIVSQVKTVEKEGIFALQIGCGQKKPKHLSKAVVGHFRAQGVPLKRKLREFPVTEDALLPVGTSLGVRHFVPGQYVDVTGITRGKGFQGCMKRHGFSGMPASHGASLSHRSGGSTGQRDAPGKVFKGRKMAGRMGADQRTVKNVWVYKIDPARNLMWVRGQVPGAEGNFVFIKDAWCKKPDISKLPFPTYLAPEDEDPSELEPLVADLGEVDPFMLAE.

The transit peptide at 1-41 (MAAVPRGLLSRINQFLSIRSITPSSSESLPHCSSFFLIRRF) directs the protein to the mitochondrion. A disordered region spans residues 206–229 (PASHGASLSHRSGGSTGQRDAPGK).

It belongs to the universal ribosomal protein uL3 family. Part of the 50S ribosomal subunit.

It is found in the mitochondrion. Its function is as follows. One of the primary rRNA binding proteins, it binds directly near the 3'-end of the 23S rRNA, where it nucleates assembly of the 50S subunit. The sequence is that of Large ribosomal subunit protein uL3m from Arabidopsis thaliana (Mouse-ear cress).